Here is a 265-residue protein sequence, read N- to C-terminus: Undecaprenyl-diphosphatase (265 aa).

Helical transmembrane passes span 19–39 (FLPV…GFTG), 42–62 (ADSF…CLYW), 80–100 (IRGL…GLVA), 108–128 (LFNP…IFLV), 143–163 (MTPG…WPGF), 181–201 (SLAA…ATLY), 220–240 (IGFV…IVLV), and 243–263 (ITLR…FFFW).

Belongs to the UppP family.

It is found in the cell inner membrane. The enzyme catalyses di-trans,octa-cis-undecaprenyl diphosphate + H2O = di-trans,octa-cis-undecaprenyl phosphate + phosphate + H(+). Its function is as follows. Catalyzes the dephosphorylation of undecaprenyl diphosphate (UPP). Confers resistance to bacitracin. The polypeptide is Undecaprenyl-diphosphatase (Solidesulfovibrio magneticus (strain ATCC 700980 / DSM 13731 / RS-1) (Desulfovibrio magneticus)).